A 276-amino-acid polypeptide reads, in one-letter code: uncharacterized protein (276 aa).

Positions 20–137 constitute an AB hydrolase-1 domain; sequence PVLIFIPGAN…PPINTFLPDS (118 aa). Residues 57–76 form a disordered region; it reads GESELTEPLPDSASNPDSDY.

The protein belongs to the AB hydrolase superfamily.

This is an uncharacterized protein from Staphylococcus aureus (strain COL).